Here is a 384-residue protein sequence, read N- to C-terminus: S-adenosylmethionine synthase (384 aa).

Histidine 15 is a binding site for ATP. Position 17 (aspartate 17) interacts with Mg(2+). Residue glutamate 43 participates in K(+) binding. The L-methionine site is built by glutamate 56 and glutamine 99. The tract at residues 99–109 (QSPDINQGVDR) is flexible loop. ATP is bound by residues 164–166 (DAK), 230–231 (RF), aspartate 239, 245–246 (RK), alanine 262, and lysine 266. Aspartate 239 provides a ligand contact to L-methionine. Lysine 270 provides a ligand contact to L-methionine.

It belongs to the AdoMet synthase family. In terms of assembly, homotetramer; dimer of dimers. It depends on Mg(2+) as a cofactor. The cofactor is K(+).

The protein localises to the cytoplasm. It carries out the reaction L-methionine + ATP + H2O = S-adenosyl-L-methionine + phosphate + diphosphate. The protein operates within amino-acid biosynthesis; S-adenosyl-L-methionine biosynthesis; S-adenosyl-L-methionine from L-methionine: step 1/1. In terms of biological role, catalyzes the formation of S-adenosylmethionine (AdoMet) from methionine and ATP. The overall synthetic reaction is composed of two sequential steps, AdoMet formation and the subsequent tripolyphosphate hydrolysis which occurs prior to release of AdoMet from the enzyme. This is S-adenosylmethionine synthase from Cronobacter sakazakii (strain ATCC BAA-894) (Enterobacter sakazakii).